A 496-amino-acid polypeptide reads, in one-letter code: Protein TOO MANY MOUTHS (496 aa).

The signal sequence occupies residues 1–23; the sequence is MARYEFFRQIFIVLSIVSPLVRS. The Extracellular portion of the chain corresponds to 24-473; it reads FTVITSDSTA…ATDVSSTSKS (450 aa). LRR repeat units lie at residues 158–182, 183–208, 210–228, 229–252, 254–276, 277–300, 302–325, 326–350, 351–373, and 375–401; these read GSSLQTLVLRENGFLGPIPDELGNL, TNLKVLDLHKNHLNGSIPLSFNRFSG, RSLDLSGNRLTGSIPGFVL, PALSVLDLNQNLLTGPVPPTLTSC, SLIKIDLSRNRVTGPIPESINRL, NQLVLLDLSYNRLSGPFPSSLQGL, SLQALMLKGNTKFSTTIPENAFKG, LKNLMILVLSNTNIQGSIPKSLTRL, NSLRVLHLEGNNLTGEIPLEFRD, and KHLSELRLNDNSLTGPVPFERDTVWRM. N-linked (GlcNAc...) asparagine glycans are attached at residues Asn181 and Asn196. N-linked (GlcNAc...) asparagine glycosylation is present at Asn362. Residues 438 to 464 are disordered; that stretch reads AETSRPAPSGTVQHLSREEDGALPDGA. Residues 474 to 494 form a helical membrane-spanning segment; that stretch reads LGFSYLSAFFLVFPNFIFMLI. The Cytoplasmic portion of the chain corresponds to 495-496; it reads SS.

Belongs to the RLP family. Forms heterodimer with ERECTA or ERL1 through their extracellular domains. Not able to form homodimer. Interacts with EPF2 but not with EPF1. Interacts with SERK1, SERK2, SERK3/BAK1 and SERK4. Interacts with EPFL9/STOMAGEN. As to expression, in epidermal cells of developing shoots and leaves, but not in roots. Expressed in the stomatal cell lineage in the developing epidermis. Accumulates strongly in meristemoid mother cells (MMC) and meristemoids, somewhat less in meristemoid sister cells (stomatal-lineage ground cells, SLGC), and is barely detected in pavement cells.

It localises to the cell membrane. Its function is as follows. Promotes cell fate progression in stomatal development. In leaves, needed to correctly orient spacing divisions, to limit the number of asymmetric divisions in neighbor cells, and to promote the asymmetric (amplifying) divisions of meristemoids. In stems, promotes the conversion of meristemoids into guard mother cells (GMC). Positively regulates CAPRICE (CPC) expression in differentiating stomaless-forming cell files. Forms constitutive complexes with ERECTA and ERL1 involved in the recognition of the stomatal regulatory peptides EPF1, EPF2 and EPFL9/STOMAGEN. Modulates the activity of the ligand-receptor pairs EPF2-ERECTA and EPF1-ERL1 in stomatal development. Functions in a combinatorial specific manner with the ERECTA-family (ERf) receptor kinases in the regulation of the immune response. The sequence is that of Protein TOO MANY MOUTHS from Arabidopsis thaliana (Mouse-ear cress).